The primary structure comprises 126 residues: Histone H2B type 1-J (126 aa).

A compositionally biased stretch (low complexity) spans 1 to 12 (MPEPAKSAPAPK). Residues 1-35 (MPEPAKSAPAPKKGSKKAVTKAQKKDGKKRKRSRK) form a disordered region. Pro2 is modified (N-acetylproline). ADP-ribosyl glutamic acid is present on Glu3. Lys6 carries the post-translational modification N6-(2-hydroxyisobutyryl)lysine; alternate. Lys6 is subject to N6-(beta-hydroxybutyryl)lysine; alternate. An N6-acetyllysine; alternate modification is found at Lys6. Position 6 is an N6-butyryllysine; alternate (Lys6). Lys6 carries the post-translational modification N6-crotonyllysine; alternate. An N6-lactoyllysine; alternate modification is found at Lys6. A Glycyl lysine isopeptide (Lys-Gly) (interchain with G-Cter in SUMO2); alternate cross-link involves residue Lys6. Ser7 bears the ADP-ribosylserine mark. Position 12 is an N6-(beta-hydroxybutyryl)lysine; alternate (Lys12). 2 positions are modified to N6-acetyllysine; alternate: Lys12 and Lys13. Lys12 and Lys13 each carry N6-crotonyllysine; alternate. The residue at position 12 (Lys12) is an N6-lactoyllysine; alternate. Position 13 is an N6-(2-hydroxyisobutyryl)lysine; alternate (Lys13). The residue at position 15 (Ser15) is a Phosphoserine; by STK4/MST1. Residues Lys16, Lys17, Lys21, and Lys24 each carry the N6-acetyllysine; alternate modification. Residues Lys16, Lys17, Lys21, and Lys24 each carry the N6-crotonyllysine; alternate modification. Residues Lys16, Lys17, Lys21, and Lys24 each carry the N6-lactoyllysine; alternate modification. Lys17 and Lys21 each carry N6-(beta-hydroxybutyryl)lysine; alternate. Lys17 carries the N6-glutaryllysine; alternate modification. 2 positions are modified to N6-(2-hydroxyisobutyryl)lysine; alternate: Lys21 and Lys24. Lys21 bears the N6-butyryllysine; alternate mark. Lys21 participates in a covalent cross-link: Glycyl lysine isopeptide (Lys-Gly) (interchain with G-Cter in SUMO2); alternate. Position 25 is an N6-(2-hydroxyisobutyryl)lysine (Lys25). The residue at position 35 (Lys35) is an N6-(2-hydroxyisobutyryl)lysine; alternate. The residue at position 35 (Lys35) is an N6-(beta-hydroxybutyryl)lysine; alternate. Lys35 is subject to N6-crotonyllysine; alternate. Lys35 carries the N6-glutaryllysine; alternate modification. Lys35 carries the post-translational modification N6-succinyllysine; alternate. Residue Lys35 forms a Glycyl lysine isopeptide (Lys-Gly) (interchain with G-Cter in ubiquitin); alternate linkage. Glu36 carries the post-translational modification PolyADP-ribosyl glutamic acid. Phosphoserine; by AMPK is present on Ser37. N6-(2-hydroxyisobutyryl)lysine; alternate occurs at positions 44, 47, and 58. An N6-lactoyllysine; alternate modification is found at Lys44. N6-glutaryllysine; alternate occurs at positions 44 and 47. Position 47 is an N6-methyllysine; alternate (Lys47). An N6,N6-dimethyllysine; alternate modification is found at Lys58. Arg80 carries the post-translational modification Dimethylated arginine. An N6-(2-hydroxyisobutyryl)lysine; alternate modification is found at Lys86. Lys86 is modified (N6-(beta-hydroxybutyryl)lysine; alternate). The residue at position 86 (Lys86) is an N6-acetyllysine; alternate. N6-lactoyllysine; alternate is present on Lys86. Residue Lys86 is modified to N6,N6,N6-trimethyllysine; alternate. Omega-N-methylarginine occurs at positions 87 and 93. The residue at position 109 (Lys109) is an N6-(2-hydroxyisobutyryl)lysine; alternate. Lys109 is modified (N6-lactoyllysine; alternate). The residue at position 109 (Lys109) is an N6-glutaryllysine; alternate. Lys109 is subject to N6-methyllysine; alternate. Ser113 is a glycosylation site (O-linked (GlcNAc) serine). Thr116 bears the Phosphothreonine mark. Residues Lys117 and Lys121 each carry the N6-(2-hydroxyisobutyryl)lysine; alternate modification. 2 positions are modified to N6-(beta-hydroxybutyryl)lysine; alternate: Lys117 and Lys121. N6-lactoyllysine; alternate is present on residues Lys117 and Lys121. An N6-glutaryllysine; alternate mark is found at Lys117 and Lys121. An N6-succinyllysine; alternate mark is found at Lys117 and Lys121. Lys117 carries the N6-malonyllysine; alternate modification. At Lys117 the chain carries N6-methylated lysine; alternate. Lys121 participates in a covalent cross-link: Glycyl lysine isopeptide (Lys-Gly) (interchain with G-Cter in ubiquitin); alternate.

The protein belongs to the histone H2B family. In terms of assembly, the nucleosome is a histone octamer containing two molecules each of H2A, H2B, H3 and H4 assembled in one H3-H4 heterotetramer and two H2A-H2B heterodimers. The octamer wraps approximately 147 bp of DNA. Heterodimer H2BC11 and H2AZ1 interacts with VPS72 (via N-terminal domain). In terms of processing, monoubiquitination at Lys-35 (H2BK34Ub) by the MSL1/MSL2 dimer is required for histone H3 'Lys-4' (H3K4me) and 'Lys-79' (H3K79me) methylation and transcription activation at specific gene loci, such as HOXA9 and MEIS1 loci. Similarly, monoubiquitination at Lys-121 (H2BK120Ub) by the RNF20/40 complex gives a specific tag for epigenetic transcriptional activation and is also prerequisite for histone H3 'Lys-4' and 'Lys-79' methylation. It also functions cooperatively with the FACT dimer to stimulate elongation by RNA polymerase II. H2BK120Ub also acts as a regulator of mRNA splicing: deubiquitination by USP49 is required for efficient cotranscriptional splicing of a large set of exons. Post-translationally, phosphorylation at Ser-37 (H2BS36ph) by AMPK in response to stress promotes transcription. Phosphorylated on Ser-15 (H2BS14ph) by STK4/MST1 during apoptosis; which facilitates apoptotic chromatin condensation. Also phosphorylated on Ser-15 in response to DNA double strand breaks (DSBs), and in correlation with somatic hypermutation and immunoglobulin class-switch recombination. GlcNAcylation at Ser-113 promotes monoubiquitination of Lys-121. It fluctuates in response to extracellular glucose, and associates with transcribed genes. In terms of processing, ADP-ribosylated by PARP1 or PARP2 on Ser-7 (H2BS6ADPr) in response to DNA damage. H2BS6ADPr promotes recruitment of CHD1L. Mono-ADP-ribosylated on Glu-3 (H2BE2ADPr) by PARP3 in response to single-strand breaks. Poly ADP-ribosylation on Glu-36 (H2BE35ADPr) by PARP1 regulates adipogenesis: it inhibits phosphorylation at Ser-37 (H2BS36ph), thereby blocking expression of pro-adipogenetic genes. Post-translationally, crotonylation (Kcr) is specifically present in male germ cells and marks testis-specific genes in post-meiotic cells, including X-linked genes that escape sex chromosome inactivation in haploid cells. Crotonylation marks active promoters and enhancers and confers resistance to transcriptional repressors. It is also associated with post-meiotically activated genes on autosomes. Lactylated in macrophages by EP300/P300 by using lactoyl-CoA directly derived from endogenous or exogenous lactate, leading to stimulates gene transcription.

It localises to the nucleus. Its subcellular location is the chromosome. Core component of nucleosome. Nucleosomes wrap and compact DNA into chromatin, limiting DNA accessibility to the cellular machineries which require DNA as a template. Histones thereby play a central role in transcription regulation, DNA repair, DNA replication and chromosomal stability. DNA accessibility is regulated via a complex set of post-translational modifications of histones, also called histone code, and nucleosome remodeling. Its function is as follows. Has broad antibacterial activity. May contribute to the formation of the functional antimicrobial barrier of the colonic epithelium, and to the bactericidal activity of amniotic fluid. In Homo sapiens (Human), this protein is Histone H2B type 1-J.